Reading from the N-terminus, the 639-residue chain is Phosphomethylpyrimidine synthase (639 aa).

Residues 49 to 71 (DTPTDFGGEQNRPVRVYDTSGPY) form a disordered region. Residues Asn231, Met260, Tyr289, His325, 345–347 (SRG), 386–389 (DGLR), and Glu425 each bind substrate. A Zn(2+)-binding site is contributed by His429. Tyr452 contributes to the substrate binding site. Residue His493 participates in Zn(2+) binding. The [4Fe-4S] cluster site is built by Cys573, Cys576, and Cys581.

This sequence belongs to the ThiC family. As to quaternary structure, homodimer. It depends on [4Fe-4S] cluster as a cofactor.

The enzyme catalyses 5-amino-1-(5-phospho-beta-D-ribosyl)imidazole + S-adenosyl-L-methionine = 4-amino-2-methyl-5-(phosphooxymethyl)pyrimidine + CO + 5'-deoxyadenosine + formate + L-methionine + 3 H(+). Its pathway is cofactor biosynthesis; thiamine diphosphate biosynthesis. Its function is as follows. Catalyzes the synthesis of the hydroxymethylpyrimidine phosphate (HMP-P) moiety of thiamine from aminoimidazole ribotide (AIR) in a radical S-adenosyl-L-methionine (SAM)-dependent reaction. This chain is Phosphomethylpyrimidine synthase, found in Teredinibacter turnerae (strain ATCC 39867 / T7901).